Here is a 253-residue protein sequence, read N- to C-terminus: Probable transcriptional regulatory protein TM_0466 (253 aa).

It belongs to the TACO1 family.

The protein resides in the cytoplasm. The chain is Probable transcriptional regulatory protein TM_0466 from Thermotoga maritima (strain ATCC 43589 / DSM 3109 / JCM 10099 / NBRC 100826 / MSB8).